Consider the following 361-residue polypeptide: Cytochrome c peroxidase, mitochondrial (361 aa).

A mitochondrion-targeting transit peptide spans 1-41 (MASAARSASRAFLRSSLRPAVRSSRFALPTQGLRVASRRGY). The active-site Proton acceptor is H122. H245 lines the heme b pocket. Residue W261 is the Tryptophan radical intermediate of the active site.

The protein belongs to the peroxidase family. Cytochrome c peroxidase subfamily. In terms of assembly, forms a one-to-one complex with cytochrome c. Requires heme b as cofactor.

Its subcellular location is the mitochondrion matrix. The protein localises to the mitochondrion intermembrane space. The enzyme catalyses 2 Fe(II)-[cytochrome c] + H2O2 + 2 H(+) = 2 Fe(III)-[cytochrome c] + 2 H2O. In terms of biological role, destroys radicals which are normally produced within the cells and which are toxic to biological systems. The protein is Cytochrome c peroxidase, mitochondrial (ccp1) of Emericella nidulans (strain FGSC A4 / ATCC 38163 / CBS 112.46 / NRRL 194 / M139) (Aspergillus nidulans).